The following is a 559-amino-acid chain: Chaperonin GroEL 3 (559 aa).

ATP is bound by residues 88–92 (DGTTT), Gly426, and Asp507.

The protein belongs to the chaperonin (HSP60) family. Forms a cylinder of 14 subunits composed of two heptameric rings stacked back-to-back. Interacts with the co-chaperonin GroES.

It is found in the cytoplasm. It catalyses the reaction ATP + H2O + a folded polypeptide = ADP + phosphate + an unfolded polypeptide.. Its function is as follows. Together with its co-chaperonin GroES, plays an essential role in assisting protein folding. The GroEL-GroES system forms a nano-cage that allows encapsulation of the non-native substrate proteins and provides a physical environment optimized to promote and accelerate protein folding. The protein is Chaperonin GroEL 3 of Methylococcus capsulatus (strain ATCC 33009 / NCIMB 11132 / Bath).